We begin with the raw amino-acid sequence, 444 residues long: Phosphoglucosamine mutase (444 aa).

Ser102 serves as the catalytic Phosphoserine intermediate. 4 residues coordinate Mg(2+): Ser102, Asp241, Asp243, and Asp245. Ser102 is modified (phosphoserine).

The protein belongs to the phosphohexose mutase family. Requires Mg(2+) as cofactor. Activated by phosphorylation.

It catalyses the reaction alpha-D-glucosamine 1-phosphate = D-glucosamine 6-phosphate. Its function is as follows. Catalyzes the conversion of glucosamine-6-phosphate to glucosamine-1-phosphate. This is Phosphoglucosamine mutase from Erwinia tasmaniensis (strain DSM 17950 / CFBP 7177 / CIP 109463 / NCPPB 4357 / Et1/99).